Consider the following 356-residue polypeptide: MALLNITSPHAQGANRTSRLMLLVVYATIPGMFTMTWFFGPGVLVNVLLASISCMLFEALAIKARQRPVGFYLRDFSALVTGVLIGVSLPPYCPWWLLISGSFIAIILAKQLYGGMGFNPFNPAMVAYALLLVSFPVEMTQWAQPKPLWVDGQLPGLMDTLAKVFSGAPIDGYSGATALDIIKQNKGLVLGDLYQQQPLLAEGRWASAGWEWVNIAFLFGGLYLLYKKVYTWHAPVSMLLALALMAALFYDSGSSSSSGSPLFHLLTGATMLGAFFIVTDPVSSTVSTKGRVIYGALIGMLVYVIRTWGSSYPDGVAFAVLLMNFAAPFIDYYTTPRTYGHKKPRRATDSTPRNGH.

4 consecutive transmembrane segments (helical) span residues 20 to 40 (LMLL…WFFG), 42 to 62 (GVLV…ALAI), 68 to 88 (PVGF…IGVS), and 117 to 137 (GFNP…SFPV). At Thr177 the chain carries FMN phosphoryl threonine. 5 helical membrane passes run 205–225 (WASA…LYLL), 229–249 (VYTW…AALF), 259–279 (GSPL…FIVT), 292–312 (VIYG…GSSY), and 315–335 (GVAF…YYTT).

Belongs to the NqrB/RnfD family. As to quaternary structure, the complex is composed of six subunits: RnfA, RnfB, RnfC, RnfD, RnfE and RnfG. It depends on FMN as a cofactor.

It localises to the cell inner membrane. Part of a membrane-bound complex that couples electron transfer with translocation of ions across the membrane. This chain is Ion-translocating oxidoreductase complex subunit D, found in Cellvibrio japonicus (strain Ueda107) (Pseudomonas fluorescens subsp. cellulosa).